We begin with the raw amino-acid sequence, 157 residues long: NADH-quinone oxidoreductase subunit I (157 aa).

4Fe-4S ferredoxin-type domains follow at residues 47–78 and 94–123; these read YLTK…VKPA and SDFQ…LSNQ. Cys-58, Cys-61, Cys-64, Cys-68, Cys-103, Cys-106, Cys-109, and Cys-113 together coordinate [4Fe-4S] cluster.

It belongs to the complex I 23 kDa subunit family. As to quaternary structure, NDH-1 is composed of 14 different subunits. Subunits NuoA, H, J, K, L, M, N constitute the membrane sector of the complex. Requires [4Fe-4S] cluster as cofactor.

Its subcellular location is the cell inner membrane. The catalysed reaction is a quinone + NADH + 5 H(+)(in) = a quinol + NAD(+) + 4 H(+)(out). In terms of biological role, NDH-1 shuttles electrons from NADH, via FMN and iron-sulfur (Fe-S) centers, to quinones in the respiratory chain. The immediate electron acceptor for the enzyme in this species is believed to be ubiquinone. Couples the redox reaction to proton translocation (for every two electrons transferred, four hydrogen ions are translocated across the cytoplasmic membrane), and thus conserves the redox energy in a proton gradient. The polypeptide is NADH-quinone oxidoreductase subunit I (nuoI) (Protochlamydia amoebophila (strain UWE25)).